The chain runs to 792 residues: Phenylalanine--tRNA ligase beta subunit (792 aa).

The region spanning 39–150 (GDEITNVVTG…ENTPIGKDIK (112 aa)) is the tRNA-binding domain. The B5 domain occupies 404-479 (SEPNIVEVDY…RIYGYNKVPS (76 aa)). Mg(2+)-binding residues include Asp457, Asp463, Glu466, and Glu467. The region spanning 699–792 (PKFPTVTRDI…LEHVLGAELR (94 aa)) is the FDX-ACB domain.

It belongs to the phenylalanyl-tRNA synthetase beta subunit family. Type 1 subfamily. Tetramer of two alpha and two beta subunits. It depends on Mg(2+) as a cofactor.

Its subcellular location is the cytoplasm. It carries out the reaction tRNA(Phe) + L-phenylalanine + ATP = L-phenylalanyl-tRNA(Phe) + AMP + diphosphate + H(+). This Clostridium acetobutylicum (strain ATCC 824 / DSM 792 / JCM 1419 / IAM 19013 / LMG 5710 / NBRC 13948 / NRRL B-527 / VKM B-1787 / 2291 / W) protein is Phenylalanine--tRNA ligase beta subunit.